We begin with the raw amino-acid sequence, 574 residues long: Ankyrin repeat protein B18 (574 aa).

6 ANK repeats span residues 56 to 87 (TGYTALHCYLYNNYFTNDVLKILLNHGVDVTM), 135 to 164 (IKSRYMLLKEEDIDENIVSTLLDKGIDPNF), 167 to 213 (DGYT…NLNA), 217 to 249 (CGNTPFHLYLSIEMCNNIHMTKMLLTFNPNFKI), 253 to 285 (HGLTPILCYITSDYIQHDILVMLIHHYETNVGE), and 327 to 356 (EGKTLLHVACEYNNTHVIDYLIRINGDINA). The region spanning 541–574 (NCLLTLLPSEIIYEILYMLTINDLYNISYPPTKV) is the F-box domain.

This Vaccinia virus (strain Ankara) (VACV) protein is Ankyrin repeat protein B18.